Here is a 751-residue protein sequence, read N- to C-terminus: FAD-dependent monooxygenase atnA (751 aa).

A helical transmembrane segment spans residues 8–28; it reads LIVGGGVAGLSLAIMLEAYGF. 3 residues coordinate FAD: Glu34, Gly48, and Arg109. Tyr218 is a catalytic residue. The FAD site is built by Asp311 and Ala324. 8 helical membrane-spanning segments follow: residues 446–466, 481–501, 508–528, 563–583, 590–610, 639–659, 663–683, and 706–726; these read PLAT…PWSV, SEVF…LWVI, LLIS…YWGW, ALLP…ALAS, DWWP…STFL, IAVV…AALL, IISL…ALIV, and AWAV…LAGA.

The protein belongs to the paxM FAD-dependent monooxygenase family. The cofactor is FAD.

The protein localises to the membrane. It functions in the pathway secondary metabolite biosynthesis; terpenoid biosynthesis. Its function is as follows. FAD-dependent monooxygenase; part of the gene cluster that mediates the biosynthesis of the meroterpenoids arthripenoids. The pathway begins with the HR-PKS atnH that catalyzes two chain-extension steps to form a reduced triketide, which then primes the SAT domain in the NR-PKS atnG to initiate three more cycles of extension to give a linear hexaketide corresponding to the polyketide part of arthripenoids. The FAD-dependent monooxygenase atnJ then performs an oxidative decarboxylation at C11 of the atnH/atnG product, via an electrophilic aromatic hydroxylation with concomitant ipso-decarboxylation. The membrane-bound polyprenyl transferase atnF then introduces a farnesyl group before the FAD-dependent monooxygenase atnK functions as the first epoxidase on terminal C12'-C13' olefin, followed by a second epoxidation on C7'-C8' catalyzed by atnA. The terpene cyclase/mutase atnI then initiates the sequential tricyclic ring formation through protonation of the terminal epoxide and catalyzes the regioselective and stereoselective 6/6/6-tricyclic ring formation. The cytochrome P450 monooxygenase atnM is responsible for hydroxylating both C1' and C10'. The next steps may involve ketoreduction and acetyl transfer by the ketoreductase atnB and the acetyltransferase atnC, and lead to the production of arthripenoid B, the final biosynthetic product of the atn cluster. The hydroquinone moiety in arthripenoid B is prone to undergo spontaneous oxidation to afford a benzoquinone compound, a key intermediate for generating structure diversity. For instance, addition of a cysteine followed by ring contraction gives arthripenoid A, tautomerization gives the main product arthripenoid C, addition of a molecular of water or amine affords arthripenoid D or E, respectively, and loss of one water forms arthripenoid F. This chain is FAD-dependent monooxygenase atnA, found in Arthrinium sp.